A 252-amino-acid chain; its full sequence is Tabtoxin biosynthesis enzyme (252 aa).

A disordered region spans residues 1 to 23 (MYQRTATQLARKPASKQGETEMN).

In terms of biological role, may play a role in tabtoxin biosynthesis. This Pseudomonas amygdali pv. tabaci (Pseudomonas syringae pv. tabaci) protein is Tabtoxin biosynthesis enzyme (tblA).